A 138-amino-acid polypeptide reads, in one-letter code: Translation initiation factor 5A (138 aa).

K42 bears the Hypusine mark.

The protein belongs to the eIF-5A family.

The protein resides in the cytoplasm. In terms of biological role, functions by promoting the formation of the first peptide bond. This chain is Translation initiation factor 5A (eif5a), found in Pyrobaculum aerophilum (strain ATCC 51768 / DSM 7523 / JCM 9630 / CIP 104966 / NBRC 100827 / IM2).